The primary structure comprises 653 residues: Leucine-rich repeat-containing protein 4 (653 aa).

A signal peptide spans 1–38 (MKLLWQVTVHHHTWNAILLPFVYLTAQVWILCAAIAAA). The LRRNT domain occupies 39 to 75 (ASAGPQNCPSVCSCSNQFSKVVCTRRGLSEVPQGIPS). Over 39–527 (ASAGPQNCPS…SLDEVMKTTK (489 aa)) the chain is Extracellular. 2 cysteine pairs are disulfide-bonded: C46-C52 and C50-C61. LRR repeat units lie at residues 76–97 (NTRY…TFRH), 100–121 (HLEV…AFNG), 124–145 (SLNT…AFEY), 148–169 (KLRE…AFNR), 172–194 (SLMR…AFEG), 197–218 (NLKY…TPLV), 219–240 (GLEE…SFHG), 243–264 (SLKK…AFDG), and 267–288 (SLVE…LFTP). N-linked (GlcNAc...) asparagine glycosylation is found at N277, N322, N363, N388, N410, N434, N440, N447, and N450. One can recognise an LRRCT domain in the interval 300 to 352 (NPWNCDCDILWLAWWLREYIPTNSTCCGRCHAPMHMRGRYLVEVDQASFQCSA). Disulfide bonds link C304/C329 and C306/C350. The region spanning 353 to 442 (PFIMDAPRDL…SNASAYLNVS (90 aa)) is the Ig-like domain. A disulfide bridge connects residues C374 and C424. A helical transmembrane segment spans residues 528–548 (IIIGCFVAVTLLAAAMLIVFY). The Cytoplasmic portion of the chain corresponds to 549–653 (KLRKRHQQRS…TKDKVQETQI (105 aa)).

Interacts with DLG4. Interacts (via LRR repeats) with NTNG2. Forms a complex with DLG4 and with NMDA receptors. N-glycosylated. As to expression, specifically expressed in brain.

It is found in the membrane. It localises to the postsynaptic cell membrane. Synaptic adhesion protein. Regulates the formation of exitatory synapses through the recruitment of pre-and-postsynaptic proteins. Organize the lamina/pathway-specific differentiation of dendrites. Plays an important role for auditory synaptic responses. Involved in the suppression of glioma. The polypeptide is Leucine-rich repeat-containing protein 4 (LRRC4) (Homo sapiens (Human)).